A 316-amino-acid chain; its full sequence is Olfactory receptor 56B2 (316 aa).

At 1–32 (MVLQELRDSNSSKFQVSEFILMGFPGIHSWQH) the chain is on the extracellular side. Asn-10 carries N-linked (GlcNAc...) asparagine glycosylation. Residues 33-53 (WLSLPLALLYLLALSANILIL) form a helical membrane-spanning segment. Topologically, residues 54–61 (IIINKEAA) are cytoplasmic. The chain crosses the membrane as a helical span at residues 62–82 (LHQPMYYFLGILAMADIGLAT). Topologically, residues 83-106 (TIMPKILAILWFNAKTISLLECFA) are extracellular. A disulfide bridge links Cys-104 with Cys-196. Residues 107–127 (QMYAIHCFVAMESSTFVCMAI) traverse the membrane as a helical segment. At 128 to 146 (DRYVAICRPLRYPSIITES) the chain is on the cytoplasmic side. The chain crosses the membrane as a helical span at residues 147 to 167 (FVFKANGFMALRNSLCLISVP). Over 168 to 203 (LLAAQRHYCSQNQIEHCLCSNLGVTSLSCDDRRINS) the chain is Extracellular. The helical transmembrane segment at 204–224 (INQVLLAWTLMGSDLGLIILS) threads the bilayer. The Cytoplasmic portion of the chain corresponds to 225-244 (YALILYSVLKLNSPEAASKA). A helical transmembrane segment spans residues 245-265 (LSTCTSHLILILFFYTVIIVI). Residues 266-279 (SITRSTGMRVPLIP) are Extracellular-facing. Residues 280–300 (VLLNVLHNVIPPALNPMVYAL) form a helical membrane-spanning segment. Residues 301-316 (KNKELRQGLYKVLRLE) are Cytoplasmic-facing.

The protein belongs to the G-protein coupled receptor 1 family.

The protein localises to the cell membrane. In terms of biological role, odorant receptor. The sequence is that of Olfactory receptor 56B2 from Homo sapiens (Human).